Here is a 1549-residue protein sequence, read N- to C-terminus: Ferredoxin-dependent glutamate synthase (1549 aa).

The active-site For GATase activity is Cys-37. A Glutamine amidotransferase type-2 domain is found at 37–435 (CGVGFIAHLD…PGEMIVLDLQ (399 aa)). Position 1116-1173 (1116-1173 (LHEVHCLLVENNLREKVILRVDGGLRTGQDVVMAALLGADEYGFGTIAMIAGGCIMAR)) interacts with FMN. [3Fe-4S] cluster is bound by residues Cys-1169, Cys-1175, and Cys-1180.

The protein belongs to the glutamate synthase family. Monomer. The cofactor is [3Fe-4S] cluster. FAD serves as cofactor. FMN is required as a cofactor.

It localises to the plastid. The protein resides in the chloroplast stroma. The catalysed reaction is 2 oxidized [2Fe-2S]-[ferredoxin] + 2 L-glutamate = L-glutamine + 2 reduced [2Fe-2S]-[ferredoxin] + 2-oxoglutarate + 2 H(+). The protein operates within amino-acid biosynthesis; L-glutamate biosynthesis via GLT pathway; L-glutamate from 2-oxoglutarate and L-glutamine (ferredoxin route): step 1/1. It participates in energy metabolism; nitrogen metabolism. The polypeptide is Ferredoxin-dependent glutamate synthase (gltB) (Cyanidium caldarium (Red alga)).